A 302-amino-acid polypeptide reads, in one-letter code: Stanniocalcin-2 (302 aa).

The signal sequence occupies residues 1–24 (MCAERLGQFMTLALVLATFDPARG). The tract at residues 23–44 (RGTDATNPPEGPQDRSSQQKGR) is disordered. An N-linked (GlcNAc...) asparagine glycan is attached at N73. The tract at residues 217–302 (KPPTAPPERQ…EQSEYSDIRR (86 aa)) is disordered. Basic and acidic residues predominate over residues 227 to 264 (PQVDRTKLSRAHHGEAGHHLPEPSSRETGRGAKGERGS). Phosphoserine; by FAM20C is present on residues S250 and S251. Residue T254 is modified to Phosphothreonine; by FAM20C.

It belongs to the stanniocalcin family. In terms of assembly, homodimer; disulfide-linked. In terms of tissue distribution, expressed in a variety of tissues including muscle, heart, pancreas, kidney, spleen, prostate, small intestine, colon and peripheral blood leukocytes.

The protein localises to the secreted. Has an anti-hypocalcemic action on calcium and phosphate homeostasis. This chain is Stanniocalcin-2 (STC2), found in Homo sapiens (Human).